The chain runs to 500 residues: Lysine--tRNA ligase (500 aa).

Mg(2+)-binding residues include Glu-411 and Glu-418.

It belongs to the class-II aminoacyl-tRNA synthetase family. As to quaternary structure, homodimer. Mg(2+) serves as cofactor.

It localises to the cytoplasm. The catalysed reaction is tRNA(Lys) + L-lysine + ATP = L-lysyl-tRNA(Lys) + AMP + diphosphate. This chain is Lysine--tRNA ligase, found in Azoarcus sp. (strain BH72).